A 426-amino-acid polypeptide reads, in one-letter code: Tektin-1 (426 aa).

Coiled-coil stretches lie at residues 21–84 (KNQY…LEQL), 268–307 (LKETKAARDQLAAHLAKVMEEIACQEKNMTVLEKAILDQE), and 339–383 (KEVG…ENTI). The interval 396 to 426 (SNPLRDGGDQGQWARACAPTPSAEDGTSHTD) is disordered.

This sequence belongs to the tektin family. Microtubule inner protein component of sperm flagellar doublet microtubules. Ubiquitinated, leading to its degradation. Deubiquitinated by USP16, promoting its stability.

The protein localises to the cytoplasm. Its subcellular location is the cytoskeleton. It localises to the cilium axoneme. The protein resides in the flagellum axoneme. In terms of biological role, microtubule inner protein (MIP) part of the dynein-decorated doublet microtubules (DMTs) in cilia and flagellar axoneme. Forms filamentous polymers in the walls of ciliary and flagellar microtubules. The protein is Tektin-1 (TEKT1) of Canis lupus familiaris (Dog).